The sequence spans 656 residues: Methylenetetrahydrofolate reductase (NADPH) (656 aa).

Residues 1–12 (MVNEARGNSSLN) are compositionally biased toward polar residues. The disordered stretch occupies residues 1-44 (MVNEARGNSSLNPCLEGSASSGSESSKDSSRCSTPGLDPERHER). Residues Ser-9, Ser-10, Ser-18, Ser-20, Ser-21, Ser-23, Ser-25, Ser-26, Ser-29, and Ser-30 each carry the phosphoserine modification. Thr-34 is subject to Phosphothreonine. The Proton donor/acceptor role is filled by Glu-63. 63–68 (EFFPPR) contributes to the NAD(+) binding site. A Phosphotyrosine modification is found at Tyr-90. Position 94 is a phosphothreonine (Thr-94). 94–95 (TW) contacts NAD(+). 94 to 95 (TW) is an FAD binding site. Ser-103 is subject to Phosphoserine. FAD is bound by residues His-127, 157–159 (RGD), 174–175 (YA), Tyr-197, 201–204 (HPEA), Asp-210, and Lys-217. Asp-159 is a substrate binding site. Residues Gln-228, Tyr-321, and Arg-325 each coordinate substrate. Ser-394 carries the phosphoserine modification. The residue at position 451 (Thr-451) is a Phosphothreonine. Residues Asn-456, 461 to 464 (AAET), 481 to 485 (TINSQ), Thr-560, and Thr-573 contribute to the S-adenosyl-L-methionine site.

The protein belongs to the methylenetetrahydrofolate reductase family. Homodimer. Requires FAD as cofactor. In terms of processing, phosphorylation of an N-terminal serine-rich phosphorylation region increases sensitivity to S-adenosylmethionine and inhibition.

The enzyme catalyses (6S)-5-methyl-5,6,7,8-tetrahydrofolate + NADP(+) = (6R)-5,10-methylene-5,6,7,8-tetrahydrofolate + NADPH + H(+). It functions in the pathway one-carbon metabolism; tetrahydrofolate interconversion. Allosterically regulated by S-adenosylmethionine (SAM). Functionally, catalyzes the conversion of 5,10-methylenetetrahydrofolate to 5-methyltetrahydrofolate, a cosubstrate for homocysteine remethylation to methionine. Represents a key regulatory connection between the folate and methionine cycles. The sequence is that of Methylenetetrahydrofolate reductase (NADPH) from Homo sapiens (Human).